The primary structure comprises 3078 residues: Probable polyketide synthase 34 (3078 aa).

The Ketosynthase family 3 (KS3) domain maps to 28 to 462 (SGDVAVIGIG…GSNVCLILSE (435 aa)). Residues Cys200, His339, and His385 each act as for beta-ketoacyl synthase activity in the active site. The acyl/malonyl transferase stretch occupies residues 665–698 (GVSADIIIGHSLGEISSSYCSGIIDFQTLCYLTY). Ser675 serves as the catalytic For acyl/malonyl transferase activity. An N-terminal hotdog fold region spans residues 954–1083 (HEKIKNEGPS…GNFSLTKHNI (130 aa)). The region spanning 954-1264 (HEKIKNEGPS…CTIVGSNPDS (311 aa)) is the PKS/mFAS DH domain. Residue His995 is the Proton acceptor; for dehydratase activity of the active site. A C-terminal hotdog fold region spans residues 1099 to 1264 (NFTSISKQDL…CTIVGSNPDS (166 aa)). Asp1171 serves as the catalytic Proton donor; for dehydratase activity. Residues 1375 to 1396 (NINNNNNNNNNNNNNNNNNSNG) are disordered. The 78-residue stretch at 2541–2618 (DNNEIIRSTI…QSIEIIKSAH (78 aa)) folds into the Carrier domain. The residue at position 2578 (Ser2578) is an O-(pantetheine 4'-phosphoryl)serine. 2 disordered regions span residues 2617-2640 (AHNN…NNNN) and 2739-2761 (NKGS…DNNS). Over residues 2619 to 2640 (NNNNNNNNNNNNNNNNNNNNNN) the composition is skewed to low complexity. The stretch at 2621 to 2652 (NNNNNNNNNNNNNNNNNNNNLVKKEQQSLDEF) forms a coiled coil.

Pantetheine 4'-phosphate serves as cofactor.

In terms of biological role, probable polyketide synthase. The sequence is that of Probable polyketide synthase 34 (pks34) from Dictyostelium discoideum (Social amoeba).